Reading from the N-terminus, the 211-residue chain is MNKTKRIEILTRLREQNPHPTTELQYNSPFELLIAVILSAQATDKGVNKATEKLFPVANTPQAILDLGLDGLKSYIKTIGLFNSKAENIIKTCRDLIEKHNGEVPENREALEALAGVGRKTANVVLNTAFGHPTIAVDTHIFRVCNRTNFAAGKDVVKVEEKLLKVVPNEFKVDVHHWLILHGRYTCIARKPRCGSCIIEDLCEYKEKVEF.

The region spanning 108-127 (REALEALAGVGRKTANVVLN) is the HhH domain. [4Fe-4S] cluster is bound by residues cysteine 187, cysteine 194, cysteine 197, and cysteine 203.

It belongs to the Nth/MutY family. [4Fe-4S] cluster is required as a cofactor.

The catalysed reaction is 2'-deoxyribonucleotide-(2'-deoxyribose 5'-phosphate)-2'-deoxyribonucleotide-DNA = a 3'-end 2'-deoxyribonucleotide-(2,3-dehydro-2,3-deoxyribose 5'-phosphate)-DNA + a 5'-end 5'-phospho-2'-deoxyribonucleoside-DNA + H(+). Functionally, DNA repair enzyme that has both DNA N-glycosylase activity and AP-lyase activity. The DNA N-glycosylase activity releases various damaged pyrimidines from DNA by cleaving the N-glycosidic bond, leaving an AP (apurinic/apyrimidinic) site. The AP-lyase activity cleaves the phosphodiester bond 3' to the AP site by a beta-elimination, leaving a 3'-terminal unsaturated sugar and a product with a terminal 5'-phosphate. This Haemophilus influenzae (strain ATCC 51907 / DSM 11121 / KW20 / Rd) protein is Endonuclease III.